Consider the following 700-residue polypeptide: mRNA cap guanine-N(7) methyltransferase (700 aa).

Basic and acidic residues-rich tracts occupy residues Met1 to Asp10 and Glu52 to Arg67. Disordered stretches follow at residues Met1–Arg263 and Ala277–Lys392. Residues Arg113–Leu128 show a composition bias toward polar residues. Composition is skewed to low complexity over residues Pro129 to Pro144 and Pro220 to His241. In terms of domain architecture, mRNA cap 0 methyltransferase spans Ser429 to Met700. Asn438–Asn439 contributes to the mRNA binding site. S-adenosyl-L-methionine contacts are provided by Lys442, Gly461, Asp483, Asp512, Gln538, and Tyr543.

Belongs to the class I-like SAM-binding methyltransferase superfamily. mRNA cap 0 methyltransferase family.

It localises to the nucleus. It carries out the reaction a 5'-end (5'-triphosphoguanosine)-ribonucleoside in mRNA + S-adenosyl-L-methionine = a 5'-end (N(7)-methyl 5'-triphosphoguanosine)-ribonucleoside in mRNA + S-adenosyl-L-homocysteine. Functionally, responsible for methylating the 5'-cap structure of mRNAs. The protein is mRNA cap guanine-N(7) methyltransferase (ABD1) of Cryptococcus neoformans var. neoformans serotype D (strain B-3501A) (Filobasidiella neoformans).